A 411-amino-acid polypeptide reads, in one-letter code: Serine hydroxymethyltransferase (411 aa).

Residues Leu-113 and 117-119 each bind (6S)-5,6,7,8-tetrahydrofolate; that span reads GHL. Residue Lys-222 is modified to N6-(pyridoxal phosphate)lysine. Position 346–348 (346–348) interacts with (6S)-5,6,7,8-tetrahydrofolate; it reads SPF.

The protein belongs to the SHMT family. Homodimer. Requires pyridoxal 5'-phosphate as cofactor.

It is found in the cytoplasm. The catalysed reaction is (6R)-5,10-methylene-5,6,7,8-tetrahydrofolate + glycine + H2O = (6S)-5,6,7,8-tetrahydrofolate + L-serine. The protein operates within one-carbon metabolism; tetrahydrofolate interconversion. Its pathway is amino-acid biosynthesis; glycine biosynthesis; glycine from L-serine: step 1/1. Functionally, catalyzes the reversible interconversion of serine and glycine with tetrahydrofolate (THF) serving as the one-carbon carrier. This reaction serves as the major source of one-carbon groups required for the biosynthesis of purines, thymidylate, methionine, and other important biomolecules. Also exhibits THF-independent aldolase activity toward beta-hydroxyamino acids, producing glycine and aldehydes, via a retro-aldol mechanism. This is Serine hydroxymethyltransferase from Prochlorococcus marinus (strain NATL2A).